We begin with the raw amino-acid sequence, 188 residues long: Peptidyl-tRNA hydrolase (188 aa).

Y14 is a binding site for tRNA. Residue H19 is the Proton acceptor of the active site. Positions 64, 66, and 112 each coordinate tRNA.

Belongs to the PTH family. As to quaternary structure, monomer.

It is found in the cytoplasm. The catalysed reaction is an N-acyl-L-alpha-aminoacyl-tRNA + H2O = an N-acyl-L-amino acid + a tRNA + H(+). Its function is as follows. Hydrolyzes ribosome-free peptidyl-tRNAs (with 1 or more amino acids incorporated), which drop off the ribosome during protein synthesis, or as a result of ribosome stalling. In terms of biological role, catalyzes the release of premature peptidyl moieties from peptidyl-tRNA molecules trapped in stalled 50S ribosomal subunits, and thus maintains levels of free tRNAs and 50S ribosomes. The sequence is that of Peptidyl-tRNA hydrolase from Bacillus licheniformis (strain ATCC 14580 / DSM 13 / JCM 2505 / CCUG 7422 / NBRC 12200 / NCIMB 9375 / NCTC 10341 / NRRL NRS-1264 / Gibson 46).